A 168-amino-acid chain; its full sequence is Myelin basic protein (168 aa).

A1 is modified (N-acetylalanine). 2 positions are modified to phosphoserine: S7 and S12. Residue Y14 is modified to Phosphotyrosine. At T17 the chain carries Phosphothreonine. S19 carries the phosphoserine modification. T20 is modified (phosphothreonine). 2 positions are modified to citrulline: R25 and R31. T35 carries the phosphothreonine modification. S40 is subject to Phosphoserine. The tract at residues 42 to 84 is disordered; sequence GRFFSSDRGAPKRGSGKDHAARTTHYGSLPQKSGHRPQDENPV. Omega-N-methylarginine occurs at positions 43 and 49. The tract at residues 45 to 86 is induces experimental autoimmune encephalomyelitis (EAE); that stretch reads FSSDRGAPKRGSGKDHAARTTHYGSLPQKSGHRPQDENPVVH. Phosphoserine is present on S56. The residue at position 65 (T65) is a Phosphothreonine. Position 67 is a phosphotyrosine (Y67). S74 bears the Phosphoserine mark. A phosphothreonine mark is found at T93 and T96. Residue Q101 is modified to Deamidated glutamine; partial. R105 carries the omega-N-methylarginine; alternate modification. R105 is subject to Symmetric dimethylarginine; alternate. S113 bears the Phosphoserine mark. K120 bears the N6-acetyllysine mark. A Citrulline modification is found at R128. Q145 carries the deamidated glutamine modification. Residue R157 is modified to Citrulline. Phosphoserine is present on S159. S163 carries the post-translational modification Phosphoserine; by UHMK1. R168 is subject to Citrulline.

This sequence belongs to the myelin basic protein family. Homodimer. As in other animals, several charge isomers may be produced as a result of optional post-translational modifications, such as phosphorylation of serine or threonine residues, deamidation of glutamine or asparagine residues, citrullination and methylation of arginine residues. Post-translationally, phosphorylated by TAOK2, VRK2, MAPK11, MAPK12, MAPK14 and MINK1. In terms of processing, proteolytically cleaved in B cell lysosomes by cathepsin CTSG which degrades the major immunogenic MBP epitope and prevents the activation of MBP-specific autoreactive T cells. As to expression, found in both the central and the peripheral nervous system.

It localises to the myelin membrane. In terms of biological role, is, with PLP, the most abundant protein component of the myelin membrane in the CNS. Has a role in both the formation and stabilization of this compact multilayer arrangement of bilayers. Each splice variant and charge isomer may have a specialized function in the assembly of an optimized, biochemically functional myelin membrane. The chain is Myelin basic protein (MBP) from Oryctolagus cuniculus (Rabbit).